The primary structure comprises 108 residues: Small ribosomal subunit protein bS6 (108 aa).

This sequence belongs to the bacterial ribosomal protein bS6 family.

Functionally, binds together with bS18 to 16S ribosomal RNA. The chain is Small ribosomal subunit protein bS6 from Nostoc sp. (strain PCC 7120 / SAG 25.82 / UTEX 2576).